Consider the following 393-residue polypeptide: Branched-chain-amino-acid aminotransferase, mitochondrial (393 aa).

A mitochondrion-targeting transit peptide spans 1–27; it reads MATAALRQIWIPRFLPVPWFLCGSRRY. Residue Tyr-169 coordinates substrate. Lys-230 bears the N6-(pyridoxal phosphate)lysine mark. Lys-322 carries the N6-acetyllysine modification.

The protein belongs to the class-IV pyridoxal-phosphate-dependent aminotransferase family. In terms of assembly, homodimer. Pyridoxal 5'-phosphate is required as a cofactor.

It localises to the mitochondrion. It carries out the reaction L-leucine + 2-oxoglutarate = 4-methyl-2-oxopentanoate + L-glutamate. The enzyme catalyses L-isoleucine + 2-oxoglutarate = (S)-3-methyl-2-oxopentanoate + L-glutamate. It catalyses the reaction L-valine + 2-oxoglutarate = 3-methyl-2-oxobutanoate + L-glutamate. Catalyzes the first reaction in the catabolism of the essential branched chain amino acids leucine, isoleucine, and valine. May also function as a transporter of branched chain alpha-keto acids. This is Branched-chain-amino-acid aminotransferase, mitochondrial (BCAT2) from Bos taurus (Bovine).